A 480-amino-acid chain; its full sequence is Acetyl-coenzyme A carboxylase carboxyl transferase subunit beta, chloroplastic (480 aa).

The CoA carboxyltransferase N-terminal domain maps to Leu212 to Lys480. Zn(2+)-binding residues include Cys216, Cys219, Cys235, and Cys238. The C4-type zinc-finger motif lies at Cys216–Cys238.

The protein belongs to the AccD/PCCB family. As to quaternary structure, acetyl-CoA carboxylase is a heterohexamer composed of biotin carboxyl carrier protein, biotin carboxylase and 2 subunits each of ACCase subunit alpha and ACCase plastid-coded subunit beta (accD). Zn(2+) is required as a cofactor.

It is found in the plastid. The protein resides in the chloroplast stroma. The enzyme catalyses N(6)-carboxybiotinyl-L-lysyl-[protein] + acetyl-CoA = N(6)-biotinyl-L-lysyl-[protein] + malonyl-CoA. It participates in lipid metabolism; malonyl-CoA biosynthesis; malonyl-CoA from acetyl-CoA: step 1/1. Functionally, component of the acetyl coenzyme A carboxylase (ACC) complex. Biotin carboxylase (BC) catalyzes the carboxylation of biotin on its carrier protein (BCCP) and then the CO(2) group is transferred by the transcarboxylase to acetyl-CoA to form malonyl-CoA. The chain is Acetyl-coenzyme A carboxylase carboxyl transferase subunit beta, chloroplastic from Illicium oligandrum (Star anise).